Reading from the N-terminus, the 147-residue chain is Large ribosomal subunit protein bL9 (147 aa).

This sequence belongs to the bacterial ribosomal protein bL9 family.

In terms of biological role, binds to the 23S rRNA. In Phocaeicola vulgatus (strain ATCC 8482 / DSM 1447 / JCM 5826 / CCUG 4940 / NBRC 14291 / NCTC 11154) (Bacteroides vulgatus), this protein is Large ribosomal subunit protein bL9.